We begin with the raw amino-acid sequence, 190 residues long: UPF0301 protein Pden_0436 (190 aa).

It belongs to the UPF0301 (AlgH) family.

The polypeptide is UPF0301 protein Pden_0436 (Paracoccus denitrificans (strain Pd 1222)).